The sequence spans 150 residues: Cyclin-dependent kinases regulatory subunit (150 aa).

Residues 115-137 (AAAQQQQQQQQQQQQQQQQHQTQ) are compositionally biased toward low complexity. The segment at 115–150 (AAAQQQQQQQQQQQQQQQQHQTQSISNDMQVPPQIS) is disordered.

The protein belongs to the CKS family. Forms a stable but non-covalent complex with the CDC28 protein and with a cyclin.

Binds to the catalytic subunit of the cyclin dependent kinase (CDC28) and is essential for its biological function. The polypeptide is Cyclin-dependent kinases regulatory subunit (Saccharomyces cerevisiae (strain ATCC 204508 / S288c) (Baker's yeast)).